The following is a 94-amino-acid chain: Citrate lyase acyl carrier protein (94 aa).

Serine 14 carries the post-translational modification O-(phosphoribosyl dephospho-coenzyme A)serine.

Belongs to the CitD family. Oligomer with a subunit composition of (alpha,beta,gamma)6.

The protein localises to the cytoplasm. Functionally, covalent carrier of the coenzyme of citrate lyase. This is Citrate lyase acyl carrier protein from Fusobacterium nucleatum subsp. nucleatum (strain ATCC 25586 / DSM 15643 / BCRC 10681 / CIP 101130 / JCM 8532 / KCTC 2640 / LMG 13131 / VPI 4355).